The primary structure comprises 512 residues: GMP synthase [glutamine-hydrolyzing] (512 aa).

The Glutamine amidotransferase type-1 domain occupies 3–196 (NILILDFGSQ…VKHICQTSET (194 aa)). Cysteine 80 functions as the Nucleophile in the catalytic mechanism. Catalysis depends on residues histidine 169 and glutamate 171. A GMPS ATP-PPase domain is found at 197–387 (WKIETIEKQL…LGLPDVLISR (191 aa)). An ATP-binding site is contributed by 225–231 (SGGVDSS).

Homodimer.

The enzyme catalyses XMP + L-glutamine + ATP + H2O = GMP + L-glutamate + AMP + diphosphate + 2 H(+). It participates in purine metabolism; GMP biosynthesis; GMP from XMP (L-Gln route): step 1/1. Its function is as follows. Catalyzes the synthesis of GMP from XMP. The chain is GMP synthase [glutamine-hydrolyzing] (guaA) from Chlamydia muridarum (strain MoPn / Nigg).